The sequence spans 325 residues: Putative gluconeogenesis factor (325 aa).

This sequence belongs to the gluconeogenesis factor family.

It localises to the cytoplasm. In terms of biological role, required for morphogenesis under gluconeogenic growth conditions. The chain is Putative gluconeogenesis factor from Streptococcus pyogenes serotype M1.